A 994-amino-acid polypeptide reads, in one-letter code: Integrator complex subunit 5 (994 aa).

A disordered region spans residues 559-586 (NSNNNNELCNGKDYGKRTKLEPGEDKVD). The span at 571–583 (DYGKRTKLEPGED) shows a compositional bias: basic and acidic residues. 2 helical membrane-spanning segments follow: residues 769-786 (YSLV…DVMY) and 810-826 (AFIN…LIAG).

Belongs to the Integrator subunit 5 family. As to quaternary structure, belongs to the multiprotein complex Integrator, at least composed of IntS1, IntS2, IntS3, IntS4, omd/IntS5, IntS6, defl/IntS7, IntS8, IntS9, IntS10, IntS11, IntS12, asun/IntS13, IntS14 and IntS15. The core complex associates with protein phosphatase 2A subunits mts/PP2A and Pp2A-29B, to form the Integrator-PP2A (INTAC) complex.

Its subcellular location is the nucleus membrane. It is found in the nucleus. It localises to the cytoplasm. In terms of biological role, component of the integrator complex, a multiprotein complex that terminates RNA polymerase II (Pol II) transcription in the promoter-proximal region of genes. The integrator complex provides a quality checkpoint during transcription elongation by driving premature transcription termination of transcripts that are unfavorably configured for transcriptional elongation: the complex terminates transcription by (1) catalyzing dephosphorylation of the C-terminal domain (CTD) of Pol II subunit Polr2A/Rbp1 and Spt5, and (2) degrading the exiting nascent RNA transcript via endonuclease activity. The integrator complex is also involved in the 3'-end processing of the U7 snRNA, and also the spliceosomal snRNAs U1, U2, U4 and U5. The protein is Integrator complex subunit 5 of Drosophila melanogaster (Fruit fly).